The sequence spans 923 residues: Tyrosine-protein kinase receptor torso (923 aa).

The first 20 residues, 1 to 20, serve as a signal peptide directing secretion; sequence MLIFYAKYAFIFWFFVGSNQ. The Extracellular portion of the chain corresponds to 21–399; sequence GEMLLMDKIS…VLLSEGNMVK (379 aa). Residues Asn-37, Asn-63, Asn-107, Asn-142, Asn-146, Asn-287, Asn-298, Asn-314, Asn-326, Asn-342, Asn-348, and Asn-377 are each glycosylated (N-linked (GlcNAc...) asparagine). The helical transmembrane segment at 400–420 threads the bilayer; it reads LVLFIIVPICCILMLCSLTFC. Topologically, residues 421–923 are cytoplasmic; sequence RRNRSEVQAL…EEELYLEPLN (503 aa). Residues 475-874 enclose the Protein kinase domain; sequence VLLQDVLGEG…TFSALKHRLG (400 aa). Residues 481–489 and Lys-502 each bind ATP; that span reads LGEGAFGLV. Ser-608 is subject to Phosphoserine. Positions 656–687 are disordered; the sequence is YIPKTAEAPKDRPKRKLKPQPKKDSKQDFKSD. Residues 676–687 show a composition bias toward basic and acidic residues; sequence PKKDSKQDFKSD. Asp-741 serves as the catalytic Proton acceptor.

This sequence belongs to the protein kinase superfamily. Tyr protein kinase family. Mg(2+) serves as cofactor. In terms of processing, may be auto-phosphorylated on tyrosine residues.

The protein localises to the membrane. The catalysed reaction is L-tyrosyl-[protein] + ATP = O-phospho-L-tyrosyl-[protein] + ADP + H(+). In terms of biological role, probable receptor tyrosine kinase which is required for determination of anterior and posterior terminal structures in the embryo. During postembryonic development, involved in the initiation of metamorphosis probably by inducing the production of ecdysone in response to prothoracicotropic hormone Ptth. Binding to Ptth stimulates activation of canonical MAPK signaling leading to ERK phosphorylation. The protein is Tyrosine-protein kinase receptor torso (tor) of Drosophila melanogaster (Fruit fly).